We begin with the raw amino-acid sequence, 238 residues long: COMM domain-containing protein 10 homolog Vlet (238 aa).

Residues 43 to 77 show a composition bias toward low complexity; it reads ASASATSSTVGTSVTTTGRVDSSTEENPTSNTEPE. The interval 43–78 is disordered; sequence ASASATSSTVGTSVTTTGRVDSSTEENPTSNTEPEY. Residues 161-225 enclose the COMM domain; sequence VIEDVAWKLN…SIQGELDAML (65 aa).

The protein belongs to the COMM domain-containing protein 10 family. As to quaternary structure, component of the commander complex consisting of the CCC subcomplex and the retriever subcomplex. Component of the CCC subcomplex. Interacts with Smn; along with Sbat and Hez may form an accessory subcomplex involved in SMN complex function.

Its function is as follows. Scaffold protein in the commander complex that is essential for endosomal recycling of transmembrane cargos; the commander complex is composed of the CCC subcomplex and the retriever subcomplex. May modulate activity of cullin-RING E3 ubiquitin ligase (CRL) complexes. May down-regulate activation of NF-kappa-B. May have an accessory function in the survival motor neuron (SMN) complex. Required for neuromuscular function and organismal viability. The protein is COMM domain-containing protein 10 homolog Vlet of Drosophila melanogaster (Fruit fly).